A 171-amino-acid chain; its full sequence is 3-hydroxydecanoyl-[acyl-carrier-protein] dehydratase (171 aa).

Residue His-70 is part of the active site.

It belongs to the thioester dehydratase family. FabA subfamily. In terms of assembly, homodimer.

It localises to the cytoplasm. It catalyses the reaction a (3R)-hydroxyacyl-[ACP] = a (2E)-enoyl-[ACP] + H2O. The catalysed reaction is (3R)-hydroxydecanoyl-[ACP] = (2E)-decenoyl-[ACP] + H2O. It carries out the reaction (2E)-decenoyl-[ACP] = (3Z)-decenoyl-[ACP]. It functions in the pathway lipid metabolism; fatty acid biosynthesis. In terms of biological role, necessary for the introduction of cis unsaturation into fatty acids. Catalyzes the dehydration of (3R)-3-hydroxydecanoyl-ACP to E-(2)-decenoyl-ACP and then its isomerization to Z-(3)-decenoyl-ACP. Can catalyze the dehydratase reaction for beta-hydroxyacyl-ACPs with saturated chain lengths up to 16:0, being most active on intermediate chain length. In Xanthomonas campestris pv. campestris (strain 8004), this protein is 3-hydroxydecanoyl-[acyl-carrier-protein] dehydratase.